Reading from the N-terminus, the 116-residue chain is MAGRKSSTPTRHKMHVKTGDTVQVISGRDKGKVGEVIKTLPKSSKVVVKDVNIRTKHVKPQQEGESGQIQTFEAPIHSSNVMHYSEKEKVASRIGYQLTEDGRKVRVLKKTGEVID.

A disordered region spans residues 1 to 27 (MAGRKSSTPTRHKMHVKTGDTVQVISG).

The protein belongs to the universal ribosomal protein uL24 family. In terms of assembly, part of the 50S ribosomal subunit.

Its function is as follows. One of two assembly initiator proteins, it binds directly to the 5'-end of the 23S rRNA, where it nucleates assembly of the 50S subunit. One of the proteins that surrounds the polypeptide exit tunnel on the outside of the subunit. The protein is Large ribosomal subunit protein uL24 of Picosynechococcus sp. (strain ATCC 27264 / PCC 7002 / PR-6) (Agmenellum quadruplicatum).